The following is a 228-amino-acid chain: UPF0173 metal-dependent hydrolase ABC2731 (228 aa).

It belongs to the UPF0173 family.

This Shouchella clausii (strain KSM-K16) (Alkalihalobacillus clausii) protein is UPF0173 metal-dependent hydrolase ABC2731.